Reading from the N-terminus, the 3108-residue chain is Probable polyketide synthase 39 (3108 aa).

In terms of domain architecture, Ketosynthase family 3 (KS3) spans 9–440 (DDDVAVIGIG…GSNVCLILSE (432 aa)). Active-site for beta-ketoacyl synthase activity residues include C181, H320, and H363. The tract at residues 643–676 (GVSADIIIGHSLGEISSAYCSGMIDFQTLCYLTY) is acyl/malonyl transferase. S653 (for acyl/malonyl transferase activity) is an active-site residue. The segment at 939 to 1068 (HEKIKSEGPS…GNFSLFKHNI (130 aa)) is N-terminal hotdog fold. Residues 939–1265 (HEKIKSEGPS…CTIAASNPDS (327 aa)) enclose the PKS/mFAS DH domain. H980 functions as the Proton acceptor; for dehydratase activity in the catalytic mechanism. The C-terminal hotdog fold stretch occupies residues 1085-1265 (NFTSISKQDL…CTIAASNPDS (181 aa)). D1157 serves as the catalytic Proton donor; for dehydratase activity. The tract at residues 1375–1435 (NNNNNNNNNN…NNNNNNNNNN (61 aa)) is disordered. The region spanning 2566 to 2643 (GNNEIIHSTI…QSIEIIKSAL (78 aa)) is the Carrier domain. Residue S2603 is modified to O-(pantetheine 4'-phosphoryl)serine. A helical transmembrane segment spans residues 2702 to 2722 (IFLTGSTGFLGAYLLMELIKM).

It depends on pantetheine 4'-phosphate as a cofactor.

It is found in the membrane. Its function is as follows. Probable polyketide synthase. This is Probable polyketide synthase 39 (pks39) from Dictyostelium discoideum (Social amoeba).